A 240-amino-acid chain; its full sequence is MELYNIKYAIDPTNKIVIEQVDNVDAFVHILEPGQEVFDETLSRYHQFPGVVSSIIFTQLVLNTIISVLSEDGSLLPLKLENTCFNFHVCNKRFVFGNLPAAIVNNETKQKLRIGSPIFAGEKLVSVVTTFHRVGENEWLLPVTGIQEASRLSGHIKVPNGVRVEKLRPNMSVYGTVQLPYDKIKRHALEQENKTPNALESCVLFYRDSEIRITYNRGDYEIMHLRMPGPLIQPNTIYYS.

The active-site Proton donor is His-46. The active-site Shared with catalytic histidine of dimeric partner is the Tyr-181. Lys-185 (proton acceptor; shared with catalytic histidine of dimeric partner) is an active-site residue.

This sequence belongs to the poxin family. Homodimer.

The catalysed reaction is 2',3'-cGAMP + H2O = Gp(2'-5')Ap(3') + H(+). Functionally, nuclease that cleaves host 2',3'-cGAMP. The chain is Poxin (p26) from Bombyx mori (Silk moth).